The primary structure comprises 512 residues: 2-isopropylmalate synthase (512 aa).

Residues isoleucine 4–lysine 266 form the Pyruvate carboxyltransferase domain. Residues aspartate 13, histidine 201, histidine 203, and asparagine 237 each coordinate Mn(2+). Residues glutamate 390–lysine 512 form a regulatory domain region.

This sequence belongs to the alpha-IPM synthase/homocitrate synthase family. LeuA type 1 subfamily. As to quaternary structure, homodimer. Mn(2+) is required as a cofactor.

It localises to the cytoplasm. The catalysed reaction is 3-methyl-2-oxobutanoate + acetyl-CoA + H2O = (2S)-2-isopropylmalate + CoA + H(+). The protein operates within amino-acid biosynthesis; L-leucine biosynthesis; L-leucine from 3-methyl-2-oxobutanoate: step 1/4. Its function is as follows. Catalyzes the condensation of the acetyl group of acetyl-CoA with 3-methyl-2-oxobutanoate (2-ketoisovalerate) to form 3-carboxy-3-hydroxy-4-methylpentanoate (2-isopropylmalate). In Listeria monocytogenes serotype 4b (strain CLIP80459), this protein is 2-isopropylmalate synthase.